Consider the following 456-residue polypeptide: MASFPPSLVFTVRRKEPILVLPSKPTPRELKQLSDIDDQEGLRFQVPVIMFYKRKLSTEGEDPVKVIREALAEALAFYYPFAGRLIEGPNRKLMVDCTSEGVLFIEADADIELNQLIGDTIDPGTYLDELLHDVPGSEGILGCPLLLIQVTRFRCGGWAFAIRLNHTMSDTLGLVQFLTTIAEFTRGAEGAPSVPPVWQREFLAARQPPFIPFQHHEYEQVIDTTPDDNKKSMTHKSFFFGPKEIRAIRSHLPLHHRSTSSTFDVLTACLWRCRTCALVLDPKKTVRISCAASGRGKHDLHVPRGYYGNVSAFPATVLRAGMISTSPLEYAMEGVKKAKARMTGEYLRSVADLMVTKGRPLYTVVGNYIVSDMTRVGLDTIDFGWGKPVYGGPARAFPLISFYGRFKDNKGEDGIVVLICLPEAAMKRFQEELKKMTGEHVDGPFDYKPIKVVSKL.

Catalysis depends on proton acceptor residues His-166 and Asp-382.

It belongs to the plant acyltransferase family. Expressed in fruit.

It carries out the reaction 3-(methylsulfanyl)propanoyl-CoA + butan-1-ol = butyl 3-(methylsulfanyl)propanoate + CoA. The catalysed reaction is ethanol + benzoyl-CoA = ethyl benzoate + CoA. The enzyme catalyses butan-1-ol + benzoyl-CoA = butyl benzoate + CoA. It catalyses the reaction 2-(methylsulfanyl)acetyl-CoA + butan-1-ol = butyl 2-(methylsulfanyl)acetate + CoA. Functionally, involved in the biosynthesis of volatile esters which confer kiwifruit flavor. Alcohol acyl transferase that can use a wide range of alcohols as substrate to produce esters. Exhibits benzoyl-CoA:alcohol O-acyltransferase activity. The sequence is that of Alcohol acyltransferase 1 from Actinidia deliciosa (Kiwi).